The sequence spans 142 residues: Large ribosomal subunit protein uL11 (142 aa).

The protein belongs to the universal ribosomal protein uL11 family. As to quaternary structure, part of the ribosomal stalk of the 50S ribosomal subunit. Interacts with L10 and the large rRNA to form the base of the stalk. L10 forms an elongated spine to which L12 dimers bind in a sequential fashion forming a multimeric L10(L12)X complex. Post-translationally, one or more lysine residues are methylated.

Forms part of the ribosomal stalk which helps the ribosome interact with GTP-bound translation factors. This Bartonella quintana (strain Toulouse) (Rochalimaea quintana) protein is Large ribosomal subunit protein uL11.